We begin with the raw amino-acid sequence, 330 residues long: Probable WRKY transcription factor 74 (330 aa).

A DNA-binding region (WRKY) is located at residues 256–322 (KIADIPPDEY…YEGEHNHSRI (67 aa)).

It is found in the nucleus. Transcription factor. Interacts specifically with the W box (5'-(T)TGAC[CT]-3'), a frequently occurring elicitor-responsive cis-acting element. The protein is Probable WRKY transcription factor 74 (WRKY74) of Arabidopsis thaliana (Mouse-ear cress).